Here is a 176-residue protein sequence, read N- to C-terminus: Protein FimF (176 aa).

A signal peptide spans 1-20 (MRNKPFYLLCAFLWLAVSHA). Cysteines 38 and 78 form a disulfide.

Belongs to the fimbrial protein family.

It localises to the fimbrium. Its function is as follows. Involved in regulation of length and mediation of adhesion of type 1 fimbriae (but not necessary for the production of fimbriae). Involved in the integration of FimH in the fimbriae. The chain is Protein FimF (fimF) from Escherichia coli (strain K12).